The following is a 110-amino-acid chain: FMRFamide-like neuropeptides 11 (110 aa).

An N-terminal signal peptide occupies residues methionine 1 to serine 22. A propeptide spanning residues tyrosine 23–glutamate 29 is cleaved from the precursor. Phenylalanine 40 and phenylalanine 54 each carry phenylalanine amide. The tract at residues leucine 60–phenylalanine 85 is disordered. At glutamine 72 the chain carries Glutamine amide. Residue phenylalanine 85 is modified to Phenylalanine amide. The propeptide occupies serine 88–lysine 110.

It belongs to the FARP (FMRFamide related peptide) family. As to expression, each flp gene is expressed in a distinct set of neurons. Flp-11 is expressed in the DD, VD and DVB motor neurons, the PVC and URX interneurons, and the AUA, BAG, DA, LUA, and SAB neurons. Also expressed in head muscle, socket or sheath cells and uterine cells. Expressed exclusively in PHC sensory neurons in males. Expressed in AVK and RIS interneurons.

Its subcellular location is the secreted. In terms of biological role, FMRFamides and FMRFamide-like peptides are neuropeptides. Induces sleep-like quiescence behavior following release from RIS interneuron. Helps to sustain locomotion stop after gamma-aminobutyric acid (GABA) induces fast slowing response. Inhibits the late-stage body bend swimming frequency in animals through several receptors including frpr-3, npr-4 and npr-22. Functionally, potent inhibitor of the activity of the dissected pharyngeal myogenic muscle system. Acts as a ligand for the npr-22 receptor in vitro. Its function is as follows. Acts as a ligand for the npr-22 receptor in vitro. In Caenorhabditis elegans, this protein is FMRFamide-like neuropeptides 11.